Here is a 230-residue protein sequence, read N- to C-terminus: 5'-methylthioadenosine/S-adenosylhomocysteine nucleosidase (230 aa).

Glu12 (proton acceptor) is an active-site residue. Substrate contacts are provided by residues Gly78, Ile153, and 174 to 175; that span reads ME. The active-site Proton donor is the Asp198.

The protein belongs to the PNP/UDP phosphorylase family. MtnN subfamily.

The catalysed reaction is S-adenosyl-L-homocysteine + H2O = S-(5-deoxy-D-ribos-5-yl)-L-homocysteine + adenine. It carries out the reaction S-methyl-5'-thioadenosine + H2O = 5-(methylsulfanyl)-D-ribose + adenine. The enzyme catalyses 5'-deoxyadenosine + H2O = 5-deoxy-D-ribose + adenine. The protein operates within amino-acid biosynthesis; L-methionine biosynthesis via salvage pathway; S-methyl-5-thio-alpha-D-ribose 1-phosphate from S-methyl-5'-thioadenosine (hydrolase route): step 1/2. Catalyzes the irreversible cleavage of the glycosidic bond in both 5'-methylthioadenosine (MTA) and S-adenosylhomocysteine (SAH/AdoHcy) to adenine and the corresponding thioribose, 5'-methylthioribose and S-ribosylhomocysteine, respectively. Also cleaves 5'-deoxyadenosine, a toxic by-product of radical S-adenosylmethionine (SAM) enzymes, into 5-deoxyribose and adenine. The chain is 5'-methylthioadenosine/S-adenosylhomocysteine nucleosidase from Shewanella frigidimarina (strain NCIMB 400).